The primary structure comprises 175 residues: UPF0398 protein SSA_1858 (175 aa).

The protein belongs to the UPF0398 family.

In Streptococcus sanguinis (strain SK36), this protein is UPF0398 protein SSA_1858.